Here is a 423-residue protein sequence, read N- to C-terminus: Keratin, type I cytoskeletal 18 (423 aa).

Position 2 is an N-acetylserine (serine 2). The interval 2–71 is head; that stretch reads SFTTRSTTFS…GLAGMGGIQT (70 aa). 4 positions are modified to phosphoserine: serine 7, serine 11, serine 16, and serine 19. A phosphoserine; alternate mark is found at serine 31 and serine 32. O-linked (GlcNAc) serine; alternate glycans are attached at residues serine 31 and serine 32. Serine 35 is subject to Phosphoserine. Tyrosine 37 carries the post-translational modification Phosphotyrosine. Serine 43 is modified (phosphoserine). An Omega-N-methylarginine modification is found at arginine 46. Serine 50 is modified (phosphoserine; alternate). Residue serine 50 is glycosylated (O-linked (GlcNAc) serine; alternate). A Phosphoserine; by MAPKAPK2 and MAPKAPK3 modification is found at serine 52. A phosphoserine mark is found at serine 57 and serine 60. Positions 62–366 are necessary for interaction with PNN; that stretch reads GLAGMGGIQT…EALLNIKVKL (305 aa). Residues 69–121 form an interaction with TRADD region; that stretch reads IQTEKETMQDLNDRLASYLDKVKSLETENRRLESKIREHLEKKGPQGVRDWGH. The coil 1A stretch occupies residues 72–107; that stretch reads EKETMQDLNDRLASYLDKVKSLETENRRLESKIREH. In terms of domain architecture, IF rod spans 72–384; sequence EKETMQDLND…RLLEDGEDFS (313 aa). Lysine 73 participates in a covalent cross-link: Glycyl lysine isopeptide (Lys-Gly) (interchain with G-Cter in SUMO2). Residues serine 85 and serine 92 each carry the phosphoserine modification. Residues 108–125 are linker 1; sequence LEKKGPQGVRDWGHYFKI. Lysine 124 bears the N6-acetyllysine mark. The tract at residues 126–217 is coil 1B; that stretch reads IEDLRAQIFA…KNHEEEVQGL (92 aa). Phosphoserine occurs at positions 137 and 170. A linker 12 region spans residues 218-241; it reads EAQIASSGLTVEVDAPKSQDLSKI. The interaction with DNAJB6 stretch occupies residues 236–384; the sequence is QDLSKIMADI…RLLEDGEDFS (149 aa). A Glycyl lysine isopeptide (Lys-Gly) (interchain with G-Cter in SUMO2) cross-link involves residue lysine 240. Residues 242-380 are coil 2; the sequence is MADIRAQYEA…ATYRRLLEDG (139 aa). Residue threonine 295 is modified to Phosphothreonine. At serine 316 the chain carries Phosphoserine. Glycyl lysine isopeptide (Lys-Gly) (interchain with G-Cter in SUMO2) cross-links involve residues lysine 363 and lysine 365. Residues 381–423 are tail; that stretch reads EDFSLNDALDSSNSMQTVQKTTTRKIVDGRVVSETNDTRVLRH. Residues serine 384, serine 391, serine 392, and serine 394 each carry the phosphoserine modification. Threonine 397 carries the phosphothreonine modification.

The protein belongs to the intermediate filament family. As to quaternary structure, heterotetramer of two type I and two type II keratins. KRT18 associates with KRT8. Interacts with PLEC isoform 1C, when in a heterodimer with KRT8. Interacts with PNN and mutated CFTR. Interacts with YWHAE, YWHAH and YWHAZ only when phosphorylated. Interacts with the thrombin-antithrombin complex. Interacts with DNAJB6, TCHP and TRADD. Interacts with FAM83H. Interacts with EPPK1. Interacts with PKP1 and PKP2. Phosphorylation increases by IL-6. Post-translationally, proteolytically cleaved by caspases during epithelial cell apoptosis. Cleavage occurs at Asp-231 by either caspase-3, caspas-6 or caspase-7. In terms of processing, O-GlcNAcylation increases solubility, and decreases stability by inducing proteasomal degradation. In terms of tissue distribution, expressed in endoderm, intestinal epithelial cells and in most extraembryonic tissues.

The protein localises to the nucleus matrix. It localises to the cytoplasm. The protein resides in the perinuclear region. Its subcellular location is the nucleus. It is found in the nucleolus. In terms of biological role, when phosphorylated, plays a role in filament reorganization. Involved in the delivery of mutated CFTR to the plasma membrane. Involved in the uptake of thrombin-antithrombin complexes by hepatic cells. Together with KRT8, is involved in interleukin-6 (IL-6)-mediated barrier protection. The polypeptide is Keratin, type I cytoskeletal 18 (Krt18) (Mus musculus (Mouse)).